The following is a 108-amino-acid chain: Large ribosomal subunit protein uL11 (108 aa).

This sequence belongs to the universal ribosomal protein uL11 family. As to quaternary structure, part of the ribosomal stalk of the 50S ribosomal subunit. Interacts with L10 and the large rRNA to form the base of the stalk. L10 forms an elongated spine to which L12 dimers bind in a sequential fashion forming a multimeric L10(L12)X complex.

Functionally, forms part of the ribosomal stalk which helps the ribosome interact with GTP-bound translation factors. The protein is Large ribosomal subunit protein uL11 (rpl11) of Aeropyrum pernix (strain ATCC 700893 / DSM 11879 / JCM 9820 / NBRC 100138 / K1).